A 442-amino-acid polypeptide reads, in one-letter code: Ankyrin repeat and MYND domain-containing protein 2 (442 aa).

ANK repeat units lie at residues 45–74 (NGMTPLMHAAYKGKLDMCKLLLRHGADVNC), 79–108 (HGYTALMFAALSGNKDITWVMLEAGAETDV), and 159–188 (KLAGPLHKIITTTNLHPVKIVMLINENPLL). 8 residues coordinate Zn(2+): Cys-320, Cys-323, Cys-332, Cys-335, Cys-341, Cys-345, His-353, and Cys-357. An MYND-type zinc finger spans residues 320 to 357 (CTTCGEKGASKRCSVCKMVIYCDQTCQKTHWFAHKKIC). Residues 401–421 (TRICQKNDNPKDSEEGEKESL) are compositionally biased toward basic and acidic residues. Residues 401–442 (TRICQKNDNPKDSEEGEKESLQSDAGLEGLQEAAVGPQVSEE) are disordered.

In terms of assembly, interacts with the retinal-specific guanylyl cyclase GC1.

It localises to the cell projection. The protein resides in the cilium. Its function is as follows. May be involved in the trafficking of signaling proteins to the cilia. The polypeptide is Ankyrin repeat and MYND domain-containing protein 2 (ANKMY2) (Bos taurus (Bovine)).